The following is a 493-amino-acid chain: Calcium-binding tyrosine phosphorylation-regulated protein (493 aa).

The RIIa domain maps to 12-49; sequence YGLKTLLEGISRAVLKTNPSNINQFAAAYFQELTMYRG. 4 disordered regions span residues 85–164, 244–271, 330–354, and 426–493; these read EPGK…VSPE, DLGSQPKENEAEPSTASSVPLQDEQEPP, NEQSKENEQSPRVSPKSVVEKTTSG, and IVSD…STAE. The segment covering 90 to 100 has biased composition (polar residues); that stretch reads SVESKVPTQME. Positions 101–117 are enriched in basic and acidic residues; it reads KSTDTDEDNVTRTEYSD. The segment covering 141 to 152 has biased composition (low complexity); that stretch reads SSKPATPKTTTP. T151 carries the phosphothreonine modification. S155 carries the post-translational modification Phosphoserine. Polar residues-rich tracts occupy residues 426–442 and 461–470; these read IVSDNTGQEESGENSVP and SGTSVKSSSG. Positions 484–493 are enriched in acidic residues; it reads IEPEGESTAE.

As to quaternary structure, interacts with FSCB. Isoform 3 self-associates. Isoform 3 and isoform 5 interact with GSK3B. Isoform 1 does not interact with GSK3B. Post-translationally, isoform 1 is phosphorylated on tyrosine residues during in vitro capacitation. Isoform 3 and isoform 5 are phosphorylated by GSK3B in vitro. Dephosphorylation affects its ability to bind calcium. As to expression, expressed in elongating spermatids and spermatozoa (at protein level). Isoform 1 is expressed in testis. Isoform 3 and isoform 5 are also expressed in brain, pancreas and numerous brain tumors.

The protein resides in the cytoplasm. It is found in the cytoskeleton. Its subcellular location is the cell projection. The protein localises to the cilium. It localises to the flagellum. The protein resides in the nucleus. Functionally, may function as a regulator of both motility- and head-associated functions such as capacitation and the acrosome reaction. Isoform 1 binds calcium in vitro. Isoform 2 and isoform 6 probably bind calcium. Isoform 3 and isoform 5 do not bind calcium in vitro. Isoform 4 probably does not bind calcium. In Homo sapiens (Human), this protein is Calcium-binding tyrosine phosphorylation-regulated protein (CABYR).